Consider the following 333-residue polypeptide: Polygalacturonase inhibitor (333 aa).

The signal sequence occupies residues 1–27; the sequence is METSKLFLLSSSLLLVLLATRPCPSLS. 2 cysteine pairs are disulfide-bonded: cysteine 30–cysteine 60 and cysteine 61–cysteine 68. LRR repeat units follow at residues 72 to 96, 97 to 120, 121 to 144, 145 to 169, 170 to 192, 194 to 220, 221 to 240, 241 to 263, 264 to 288, and 290 to 312; these read THRI…VGDL, PFLE…AIAK, LKHL…FFSE, LKNL…LSLL, PNLG…SFGK, AGST…GFDP, NVMD…FFNA, NKST…RVEF, PKSL…MTSL, and LQFL…KLQS. N-linked (GlcNAc...) asparagine glycans are attached at residues asparagine 109, asparagine 133, asparagine 147, and asparagine 157. A glycan (N-linked (GlcNAc...) asparagine) is linked at asparagine 241. A glycan (N-linked (GlcNAc...) asparagine) is linked at asparagine 294. Disulfide bonds link cysteine 301-cysteine 323 and cysteine 325-cysteine 332.

The protein belongs to the polygalacturonase-inhibiting protein family.

Its subcellular location is the secreted. It is found in the cell wall. The protein localises to the membrane. Its function is as follows. Inhibitor of fungal polygalacturonase. It is an important factor for plant resistance to phytopathogenic fungi. In Vitis vinifera (Grape), this protein is Polygalacturonase inhibitor (pgip).